Reading from the N-terminus, the 303-residue chain is Enoyl-CoA hydratase domain-containing protein 3, mitochondrial (303 aa).

Residues 1-17 constitute a mitochondrion transit peptide; that stretch reads MAAVAVLRAFGASGPMC. Lysine 110 carries the post-translational modification N6-succinyllysine.

It belongs to the enoyl-CoA hydratase/isomerase family. As to expression, expressed in adipocytes. Expressed in blood cells, with higher expression in patients with low coronary lesions.

The protein localises to the mitochondrion. Its function is as follows. May play a role in fatty acid biosynthesis and insulin sensitivity. In Homo sapiens (Human), this protein is Enoyl-CoA hydratase domain-containing protein 3, mitochondrial.